A 523-amino-acid polypeptide reads, in one-letter code: 2-oxopropyl-CoM reductase, carboxylating (523 aa).

53 to 54 (AA) provides a ligand contact to FAD. Arg56 provides a ligand contact to 2-oxopropyl-coenzyme M. FAD is bound at residue Ser81. Cys82 serves as a coordination point for 2-oxopropyl-coenzyme M. Residues Cys82 and Cys87 are joined by a disulfide bond. Ala158 contacts FAD. NADP(+) is bound by residues 222–225 (GSKT) and 245–246 (RT). Asp353 contacts FAD. NADP(+) is bound at residue Glu360. Met361 is a binding site for FAD. Arg365 provides a ligand contact to 2-oxopropyl-coenzyme M. Phe501 is a binding site for FAD.

Belongs to the class-I pyridine nucleotide-disulfide oxidoreductase family. Homodimer. Component II of the aliphatic epoxide carboxylation complex together with components I, III and IV. Requires FAD as cofactor.

It catalyses the reaction coenzyme M + acetoacetate + NADP(+) = 2-oxopropyl-coenzyme M + CO2 + NADPH. The protein operates within alkene metabolism; propylene degradation. Its activity is regulated as follows. Inhibited (at 40%) by the coenzyme M analog 2-bromoethanesulfonate (BES). BES is a time-dependent inactivator of dithiothreitol-reduced 2-KPCC, where the redox active cysteines are in the free thiol forms. BES does not inactivate air-oxidized 2-KPCC, where the redox active cysteine pair is in the disulfide form. BES specifically alkylates the interchange thiol that facilitates thioether bond cleavage and enolacetone formation during catalysis. In terms of biological role, involved in aliphatic epoxide carboxylation. Catalyzes the reductive cleavage of the thioether bond of 2-oxopropyl-coenzyme M (2-KPC), and the subsequent carboxylation of the ketopropyl cleavage product, yielding the products acetoacetate and free coenzyme M. The chain is 2-oxopropyl-CoM reductase, carboxylating from Xanthobacter autotrophicus (strain ATCC BAA-1158 / Py2).